Here is a 529-residue protein sequence, read N- to C-terminus: Bifunctional purine biosynthesis protein PurH (529 aa).

Residues 1–148 (MQQRRPVRRA…KNHKDVAIVV (148 aa)) form the MGS-like domain. Lys287 carries the post-translational modification N6-acetyllysine.

This sequence belongs to the PurH family.

The enzyme catalyses (6R)-10-formyltetrahydrofolate + 5-amino-1-(5-phospho-beta-D-ribosyl)imidazole-4-carboxamide = 5-formamido-1-(5-phospho-D-ribosyl)imidazole-4-carboxamide + (6S)-5,6,7,8-tetrahydrofolate. The catalysed reaction is IMP + H2O = 5-formamido-1-(5-phospho-D-ribosyl)imidazole-4-carboxamide. Its pathway is purine metabolism; IMP biosynthesis via de novo pathway; 5-formamido-1-(5-phospho-D-ribosyl)imidazole-4-carboxamide from 5-amino-1-(5-phospho-D-ribosyl)imidazole-4-carboxamide (10-formyl THF route): step 1/1. The protein operates within purine metabolism; IMP biosynthesis via de novo pathway; IMP from 5-formamido-1-(5-phospho-D-ribosyl)imidazole-4-carboxamide: step 1/1. This is Bifunctional purine biosynthesis protein PurH from Escherichia coli O157:H7.